Here is a 427-residue protein sequence, read N- to C-terminus: Transcription termination factor Rho (427 aa).

A Rho RNA-BD domain is found at 55 to 130 (YFFGEGVLEI…IKIEAINYRP (76 aa)). ATP-binding positions include 173–178 (GKGQRG), 185–190 (KAGKTT), and Arg216.

It belongs to the Rho family. In terms of assembly, homohexamer. The homohexamer assembles into an open ring structure.

Functionally, facilitates transcription termination by a mechanism that involves Rho binding to the nascent RNA, activation of Rho's RNA-dependent ATPase activity, and release of the mRNA from the DNA template. This chain is Transcription termination factor Rho, found in Thermotoga maritima (strain ATCC 43589 / DSM 3109 / JCM 10099 / NBRC 100826 / MSB8).